The following is a 92-amino-acid chain: Large ribosomal subunit protein bL27 (92 aa).

Positions 1-21 (MSKKKGVGSSRNGRDSESKRL) are disordered. Positions 12-21 (NGRDSESKRL) are enriched in basic and acidic residues.

Belongs to the bacterial ribosomal protein bL27 family.

The sequence is that of Large ribosomal subunit protein bL27 from Halothermothrix orenii (strain H 168 / OCM 544 / DSM 9562).